The primary structure comprises 172 residues: Ribosome maturation factor RimM (172 aa).

The PRC barrel domain occupies 96-168 (EGEFYYHQII…RVDVELMEGL (73 aa)).

This sequence belongs to the RimM family. As to quaternary structure, binds ribosomal protein uS19.

The protein localises to the cytoplasm. Functionally, an accessory protein needed during the final step in the assembly of 30S ribosomal subunit, possibly for assembly of the head region. Essential for efficient processing of 16S rRNA. May be needed both before and after RbfA during the maturation of 16S rRNA. It has affinity for free ribosomal 30S subunits but not for 70S ribosomes. This is Ribosome maturation factor RimM from Streptococcus pyogenes serotype M3 (strain ATCC BAA-595 / MGAS315).